Consider the following 393-residue polypeptide: S-adenosylmethionine synthase (393 aa).

Residue histidine 16 participates in ATP binding. A Mg(2+)-binding site is contributed by aspartate 18. Glutamate 44 is a K(+) binding site. L-methionine-binding residues include glutamate 57 and glutamine 100. The tract at residues glutamine 100–histidine 110 is flexible loop. Residues aspartate 167 to lysine 169, arginine 238 to phenylalanine 239, aspartate 247, arginine 253 to lysine 254, alanine 270, and lysine 274 contribute to the ATP site. Aspartate 247 is a binding site for L-methionine. Lysine 278 contacts L-methionine.

It belongs to the AdoMet synthase family. In terms of assembly, homotetramer; dimer of dimers. Mg(2+) is required as a cofactor. It depends on K(+) as a cofactor.

It is found in the cytoplasm. It carries out the reaction L-methionine + ATP + H2O = S-adenosyl-L-methionine + phosphate + diphosphate. It participates in amino-acid biosynthesis; S-adenosyl-L-methionine biosynthesis; S-adenosyl-L-methionine from L-methionine: step 1/1. Catalyzes the formation of S-adenosylmethionine (AdoMet) from methionine and ATP. The overall synthetic reaction is composed of two sequential steps, AdoMet formation and the subsequent tripolyphosphate hydrolysis which occurs prior to release of AdoMet from the enzyme. This is S-adenosylmethionine synthase from Albidiferax ferrireducens (strain ATCC BAA-621 / DSM 15236 / T118) (Rhodoferax ferrireducens).